A 220-amino-acid polypeptide reads, in one-letter code: Outer membrane protein assembly factor BamD (220 aa).

A signal peptide spans 1 to 22 (MRLKHFKTFLFITMAIIVIGTG). Cysteine 23 carries the N-palmitoyl cysteine lipid modification. Cysteine 23 carries S-diacylglycerol cysteine lipidation.

Belongs to the BamD family. Part of the Bam complex.

The protein localises to the cell outer membrane. Its function is as follows. Part of the outer membrane protein assembly complex, which is involved in assembly and insertion of beta-barrel proteins into the outer membrane. This chain is Outer membrane protein assembly factor BamD, found in Helicobacter pylori (strain ATCC 700392 / 26695) (Campylobacter pylori).